A 559-amino-acid chain; its full sequence is NAD(P)H-quinone oxidoreductase chain 4-2 (559 aa).

Helical transmembrane passes span 5-25 (FPWL…IPLI), 35-55 (WYAL…FWTN), 86-106 (ISMP…FAAW), 114-134 (LFYF…VAQD), 136-156 (LLLF…VCIW), 168-188 (FLLY…GLAF), 207-227 (IALE…KLAI), 242-262 (SAPV…YGLI), 274-294 (VYFA…GGFS), 310-330 (VSHM…GISG), 331-351 (AMLQ…LAGV), 374-394 (VFAL…MSGF), 417-437 (VTVF…LSML), and 488-508 (VFIA…PKLA).

The protein belongs to the complex I subunit 4 family.

Its subcellular location is the cellular thylakoid membrane. It carries out the reaction a plastoquinone + NADH + (n+1) H(+)(in) = a plastoquinol + NAD(+) + n H(+)(out). It catalyses the reaction a plastoquinone + NADPH + (n+1) H(+)(in) = a plastoquinol + NADP(+) + n H(+)(out). Its function is as follows. NDH-1 shuttles electrons from NAD(P)H, via FMN and iron-sulfur (Fe-S) centers, to quinones in the respiratory chain. The immediate electron acceptor for the enzyme in this species is believed to be plastoquinone. Couples the redox reaction to proton translocation (for every two electrons transferred, four hydrogen ions are translocated across the cytoplasmic membrane), and thus conserves the redox energy in a proton gradient. This chain is NAD(P)H-quinone oxidoreductase chain 4-2 (ndhD2), found in Synechocystis sp. (strain ATCC 27184 / PCC 6803 / Kazusa).